Reading from the N-terminus, the 621-residue chain is F-box only protein 21 (621 aa).

In terms of domain architecture, F-box spans 28–77 (SCLVNLPGEVLEYILCCGSLTAADIGRVSSTCRRLRELCQSSGKVWKEQF).

As to quaternary structure, interacts with SKP1 and CUL1.

In terms of biological role, substrate-recognition component of the SCF (SKP1-CUL1-F-box protein)-type E3 ubiquitin ligase complex. The protein is F-box only protein 21 (FBXO21) of Pongo abelii (Sumatran orangutan).